We begin with the raw amino-acid sequence, 402 residues long: Alkaline proteinase (402 aa).

Positions 1–20 are cleaved as a signal peptide; sequence MVTLRRLAVLLGAIPAALAA. The propeptide occupies 21 to 120; the sequence is PTTQKREVVP…EQDEGEFSTA (100 aa). Residues 32–108 form the Inhibitor I9 domain; sequence KYIVTLKEGA…EVEEDQIWHL (77 aa). A Peptidase S8 domain is found at 128 to 402; the sequence is AWGLGTISHR…NRILYNGNGA (275 aa). Catalysis depends on charge relay system residues aspartate 160, histidine 191, and serine 347. The segment covering 382–392 has biased composition (polar residues); that stretch reads GRVSNPGSGSP. Positions 382 to 402 are disordered; it reads GRVSNPGSGSPNRILYNGNGA.

Belongs to the peptidase S8 family.

In Hapsidospora chrysogena (Acremonium chrysogenum), this protein is Alkaline proteinase (ALP).